The chain runs to 426 residues: Chaperone SurA (426 aa).

The signal sequence occupies residues 1–13 (MLGALFLGTAANA). 2 PpiC domains span residues 164-265 (SEEL…KLLE) and 274-373 (RDEV…EVLG).

Its subcellular location is the periplasm. The catalysed reaction is [protein]-peptidylproline (omega=180) = [protein]-peptidylproline (omega=0). In terms of biological role, chaperone involved in the correct folding and assembly of outer membrane proteins. Recognizes specific patterns of aromatic residues and the orientation of their side chains, which are found more frequently in integral outer membrane proteins. May act in both early periplasmic and late outer membrane-associated steps of protein maturation. The protein is Chaperone SurA of Pseudomonas fluorescens (strain Pf0-1).